Here is a 154-residue protein sequence, read N- to C-terminus: Large ribosomal subunit protein uL23y (154 aa).

Belongs to the universal ribosomal protein uL23 family.

Its function is as follows. Binds to a specific region on the 26S rRNA. The chain is Large ribosomal subunit protein uL23y (RPL23AB) from Arabidopsis thaliana (Mouse-ear cress).